Consider the following 59-residue polypeptide: Large ribosomal subunit protein uL30 (59 aa).

This sequence belongs to the universal ribosomal protein uL30 family. In terms of assembly, part of the 50S ribosomal subunit.

This chain is Large ribosomal subunit protein uL30, found in Alteromonas mediterranea (strain DSM 17117 / CIP 110805 / LMG 28347 / Deep ecotype).